The sequence spans 225 residues: Heptaprenylglyceryl phosphate synthase (225 aa).

K6 lines the sn-glycerol 1-phosphate pocket. Residues D8 and T34 each contribute to the Mg(2+) site. Sn-glycerol 1-phosphate is bound by residues 153 to 158, G183, and 203 to 204; these read YVEYSG and GN.

It belongs to the GGGP/HepGP synthase family. Group I subfamily. In terms of assembly, homodimer. Mg(2+) is required as a cofactor.

The enzyme catalyses sn-glycerol 1-phosphate + all-trans-heptaprenyl diphosphate = 3-heptaprenyl-sn-glycero-1-phosphate + diphosphate. It functions in the pathway membrane lipid metabolism; glycerophospholipid metabolism. Functionally, prenyltransferase that catalyzes in vivo the transfer of the heptaprenyl moiety of heptaprenyl pyrophosphate (HepPP; 35 carbon atoms) to the C3 hydroxyl of sn-glycerol-1-phosphate (G1P), producing heptaprenylglyceryl phosphate (HepGP). This reaction is an ether-bond-formation step in the biosynthesis of archaea-type G1P-based membrane lipids found in Bacillales. To a much lesser extent, is also able to use geranylgeranyl diphosphate (GGPP; C20) as the prenyl donor. The chain is Heptaprenylglyceryl phosphate synthase from Listeria monocytogenes serovar 1/2a (strain ATCC BAA-679 / EGD-e).